The following is a 380-amino-acid chain: Histidinol-phosphate aminotransferase (380 aa).

N6-(pyridoxal phosphate)lysine is present on lysine 232.

This sequence belongs to the class-II pyridoxal-phosphate-dependent aminotransferase family. Histidinol-phosphate aminotransferase subfamily. As to quaternary structure, homodimer. The cofactor is pyridoxal 5'-phosphate.

The catalysed reaction is L-histidinol phosphate + 2-oxoglutarate = 3-(imidazol-4-yl)-2-oxopropyl phosphate + L-glutamate. It functions in the pathway amino-acid biosynthesis; L-histidine biosynthesis; L-histidine from 5-phospho-alpha-D-ribose 1-diphosphate: step 7/9. The polypeptide is Histidinol-phosphate aminotransferase (Mycobacterium bovis (strain BCG / Pasteur 1173P2)).